Here is a 512-residue protein sequence, read N- to C-terminus: ATP synthase subunit alpha (512 aa).

169–176 contacts ATP; that stretch reads GDRQTGKT.

The protein belongs to the ATPase alpha/beta chains family. In terms of assembly, F-type ATPases have 2 components, CF(1) - the catalytic core - and CF(0) - the membrane proton channel. CF(1) has five subunits: alpha(3), beta(3), gamma(1), delta(1), epsilon(1). CF(0) has four main subunits: a(1), b(1), b'(1) and c(9-12).

The protein resides in the cell inner membrane. The enzyme catalyses ATP + H2O + 4 H(+)(in) = ADP + phosphate + 5 H(+)(out). Its function is as follows. Produces ATP from ADP in the presence of a proton gradient across the membrane. The alpha chain is a regulatory subunit. The chain is ATP synthase subunit alpha from Cereibacter sphaeroides (strain ATCC 17025 / ATH 2.4.3) (Rhodobacter sphaeroides).